A 181-amino-acid chain; its full sequence is TATA-box-binding protein (181 aa).

2 consecutive repeat copies span residues 7-83 (IVNV…IKEL) and 98-173 (VQNM…LSTL).

Belongs to the TBP family.

Its function is as follows. General factor that plays a role in the activation of archaeal genes transcribed by RNA polymerase. Binds specifically to the TATA box promoter element which lies close to the position of transcription initiation. The chain is TATA-box-binding protein (tbp) from Methanothermococcus thermolithotrophicus (Methanococcus thermolithotrophicus).